Consider the following 364-residue polypeptide: MAANYWESTQRKHWQFTKQDLAAIRQRLDDEDPGLVQMFPLPQLRHLNIYFNQQINRLSKRIGLRQQVMATAQVYLKRFYTRIAIRQTNPYLVLTTVLYLACKMEECPQHIRMMTQEARSLWPSDLHGHDPARVGECEFSLISEMHSNLIVHQPYRSLLGVQDEFGLTQDEMSLAWTVINDHYMTDLPLLHPPHVVALTAVLLALVLRPSANTPAAGGAGGNAGAAAAAAAAGAGGVAMAATALAQAQAQVQARAAAIAAAGAGGGTPGFGSQGSQQQAGFSQGNSQGSLQGDSAAAEPKKVTDPRLAKVQRFAAWLADSNIDIEAMVDCTQELISFYECHEQYNDKHTKEQISRFIKARNLDK.

Residues 53 to 143 (QQINRLSKRI…VGECEFSLIS (91 aa)) enclose the Cyclin N-terminal domain. The interval 268 to 303 (PGFGSQGSQQQAGFSQGNSQGSLQGDSAAAEPKKVT) is disordered. Residues 273 to 289 (QGSQQQAGFSQGNSQGS) show a composition bias toward low complexity.

The protein belongs to the cyclin family. Cyclin C subfamily. As to quaternary structure, component of the SRB8-11 complex, a regulatory module of the Mediator complex.

Its subcellular location is the nucleus. Component of the SRB8-11 complex. The SRB8-11 complex is a regulatory module of the Mediator complex which is itself involved in regulation of basal and activated RNA polymerase II-dependent transcription. The SRB8-11 complex may be involved in the transcriptional repression of a subset of genes regulated by Mediator. It may inhibit the association of the Mediator complex with RNA polymerase II to form the holoenzyme complex. The SRB8-11 complex phosphorylates the C-terminal domain (CTD) of the largest subunit of RNA polymerase II. This Chaetomium globosum (strain ATCC 6205 / CBS 148.51 / DSM 1962 / NBRC 6347 / NRRL 1970) (Soil fungus) protein is RNA polymerase II holoenzyme cyclin-like subunit (SSN8).